The following is a 290-amino-acid chain: Acetyl-coenzyme A carboxylase carboxyl transferase subunit beta (290 aa).

Residues 29–290 enclose the CoA carboxyltransferase N-terminal domain; sequence LWGKCPECSQ…RLHGYREKRK (262 aa). Positions 33, 36, 52, and 55 each coordinate Zn(2+). The segment at 33–55 adopts a C4-type zinc-finger fold; that stretch reads CPECSQVVYRKDLLENANVCSNC.

The protein belongs to the AccD/PCCB family. In terms of assembly, acetyl-CoA carboxylase is a heterohexamer composed of biotin carboxyl carrier protein (AccB), biotin carboxylase (AccC) and two subunits each of ACCase subunit alpha (AccA) and ACCase subunit beta (AccD). Zn(2+) is required as a cofactor.

The protein localises to the cytoplasm. The catalysed reaction is N(6)-carboxybiotinyl-L-lysyl-[protein] + acetyl-CoA = N(6)-biotinyl-L-lysyl-[protein] + malonyl-CoA. Its pathway is lipid metabolism; malonyl-CoA biosynthesis; malonyl-CoA from acetyl-CoA: step 1/1. Functionally, component of the acetyl coenzyme A carboxylase (ACC) complex. Biotin carboxylase (BC) catalyzes the carboxylation of biotin on its carrier protein (BCCP) and then the CO(2) group is transferred by the transcarboxylase to acetyl-CoA to form malonyl-CoA. In Prochlorococcus marinus (strain MIT 9211), this protein is Acetyl-coenzyme A carboxylase carboxyl transferase subunit beta.